The chain runs to 240 residues: HTH-type transcriptional repressor STM4068 (240 aa).

The region spanning 9 to 77 (TPLYKQLFFI…RGSGSVVCSV (69 aa)) is the HTH gntR-type domain. Residues 37-56 (QKEIARSYNVSLIVVKQAWS) constitute a DNA-binding region (H-T-H motif).

Functionally, represses the expression of the STM4065-STM4067 operon. This Salmonella typhimurium (strain LT2 / SGSC1412 / ATCC 700720) protein is HTH-type transcriptional repressor STM4068.